The chain runs to 167 residues: 3-isopropylmalate dehydratase small subunit (167 aa).

The protein belongs to the LeuD family. LeuD type 2 subfamily. Heterodimer of LeuC and LeuD.

The enzyme catalyses (2R,3S)-3-isopropylmalate = (2S)-2-isopropylmalate. The protein operates within amino-acid biosynthesis; L-leucine biosynthesis; L-leucine from 3-methyl-2-oxobutanoate: step 2/4. Its function is as follows. Catalyzes the isomerization between 2-isopropylmalate and 3-isopropylmalate, via the formation of 2-isopropylmaleate. In Oleidesulfovibrio alaskensis (strain ATCC BAA-1058 / DSM 17464 / G20) (Desulfovibrio alaskensis), this protein is 3-isopropylmalate dehydratase small subunit.